Consider the following 930-residue polypeptide: Protein translocase subunit SecA (930 aa).

ATP is bound by residues Gln87, 105–109 (GEGKT), and Asp515. 4 residues coordinate Zn(2+): Cys914, Cys916, Cys925, and His926.

This sequence belongs to the SecA family. In terms of assembly, monomer and homodimer. Part of the essential Sec protein translocation apparatus which comprises SecA, SecYEG and auxiliary proteins SecDF-YajC and YidC. Zn(2+) is required as a cofactor.

It localises to the cell inner membrane. The protein resides in the cytoplasm. It catalyses the reaction ATP + H2O + cellular proteinSide 1 = ADP + phosphate + cellular proteinSide 2.. Part of the Sec protein translocase complex. Interacts with the SecYEG preprotein conducting channel. Has a central role in coupling the hydrolysis of ATP to the transfer of proteins into and across the cell membrane, serving both as a receptor for the preprotein-SecB complex and as an ATP-driven molecular motor driving the stepwise translocation of polypeptide chains across the membrane. The protein is Protein translocase subunit SecA of Cupriavidus metallidurans (strain ATCC 43123 / DSM 2839 / NBRC 102507 / CH34) (Ralstonia metallidurans).